Consider the following 465-residue polypeptide: Sodium-dependent phosphate transport protein 1 (465 aa).

N-linked (GlcNAc...) asparagine glycans are attached at residues asparagine 39, asparagine 47, and asparagine 56. Transmembrane regions (helical) follow at residues 79-99 (GLVL…VGYL), 117-137 (SVLS…VIVC), 176-196 (FVMG…LLGW), 199-219 (VFYI…ILLF), 260-280 (LPLW…NLLV), 299-319 (GLLS…AGQM), 337-357 (LFTT…LYLS), 363-383 (TVIF…GQLI), 399-419 (VTAL…GLIL), and 431-451 (FFLM…FAKG).

Belongs to the major facilitator superfamily. Sodium/anion cotransporter family. In terms of assembly, interacts with PDZK1.

It localises to the apical cell membrane. The catalysed reaction is 3 Na(+)(out) + phosphate(out) = 3 Na(+)(in) + phosphate(in). It catalyses the reaction urate(out) = urate(in). In terms of biological role, important for the resorption of phosphate by the kidney. May be involved in actively transporting phosphate into cells via Na(+) cotransport in the renal brush border membrane. Plays a role in urate transport in the kidney. This chain is Sodium-dependent phosphate transport protein 1 (Slc17a1), found in Rattus norvegicus (Rat).